Here is a 160-residue protein sequence, read N- to C-terminus: Serine-protein kinase RsbW (160 aa).

Belongs to the anti-sigma-factor family.

The enzyme catalyses L-seryl-[protein] + ATP = O-phospho-L-seryl-[protein] + ADP + H(+). It catalyses the reaction L-threonyl-[protein] + ATP = O-phospho-L-threonyl-[protein] + ADP + H(+). Functionally, negative regulator of sigma-B activity. Phosphorylates and inactivates its specific antagonist protein, RsbV. Upon phosphorylation of RsbV, RsbW is released and binds to sigma-B, thereby blocking its ability to form an RNA polymerase holoenzyme (E-sigma-B). This is Serine-protein kinase RsbW from Bacillus cereus (strain AH187).